A 1487-amino-acid polypeptide reads, in one-letter code: Collagen alpha-1(II) chain (1487 aa).

A signal peptide spans 1–25 (MIRLGAPQSLVLLTLLIAAVLRCQG). Residues 26 to 181 (QDAQEAGSCL…PGLSAGNFAA (156 aa)) constitute a propeptide, N-terminal propeptide. The region spanning 32 to 89 (GSCLQNGQRYKDKDVWKPSSCRICVCDTGNVLCDDIICEDPDCLNPEIPFGECCPICP) is the VWFC domain. The segment at 96 to 179 (SGKLGPKGQK…GPPGLSAGNF (84 aa)) is disordered. Basic and acidic residues-rich tracts occupy residues 104–115 (QKGEPGDIRDII) and 132–153 (PRGDRGDKGEKGAPGPRGRDGE). The segment covering 157-172 (PGNPGPAGPPGPPGPP) has biased composition (pro residues). Residue lysine 190 is modified to 5-hydroxylysine. O-linked (Gal...) hydroxylysine glycosylation is present at lysine 190. The disordered stretch occupies residues 191–1237 (AGGAQMGVMQ…QREKGPDPMQ (1047 aa)). Low complexity predominate over residues 192 to 203 (GGAQMGVMQGPM). The interval 201 to 1214 (GPMGPMGPRG…PGPPGPPGPP (1014 aa)) is triple-helical region. Over residues 208–217 (PRGPPGPAGA) the composition is skewed to pro residues. A compositionally biased stretch (low complexity) spans 218–239 (PGPQGFQGNPGEPGEPGVSGPM). The segment covering 251–265 (PGDDGEAGKPGKSGE) has biased composition (basic and acidic residues). Lysine 287, lysine 299, and lysine 308 each carry 5-hydroxylysine. Residues lysine 287, lysine 299, and lysine 308 are each glycosylated (O-linked (Gal...) hydroxylysine). Composition is skewed to low complexity over residues 310–320 (ESGSPGENGSP) and 335–350 (TGPAGAAGARGNDGQP). The span at 360-369 (GPAGGPGFPG) shows a compositional bias: gly residues. 2 stretches are compositionally biased toward low complexity: residues 370-382 (APGAKGEAGPTGA) and 403-431 (PAGASGNPGTDGIPGAKGSAGAPGIAGAP). 5-hydroxylysine is present on lysine 374. Lysine 374 is a glycosylation site (O-linked (Gal...) hydroxylysine). Pro residues predominate over residues 433–442 (FPGPRGPPGP). The segment covering 472 to 485 (ETGPAGPQGAPGPA) has biased composition (low complexity). 2 positions are modified to 5-hydroxylysine: lysine 608 and lysine 620. Lysine 608 and lysine 620 each carry an O-linked (Gal...) hydroxylysine glycan. Positions 622–631 (LAGAPGLRGL) are enriched in low complexity. 4-hydroxyproline occurs at positions 659 and 668. The residue at position 670 (proline 670) is a 3-hydroxyproline. 4-hydroxyproline occurs at positions 671 and 674. Low complexity predominate over residues 706 to 736 (ERGSPGAQGLQGPRGLPGTPGTDGPKGAAGP). The segment covering 764–775 (KGDRGDVGEKGP) has biased composition (basic and acidic residues). Composition is skewed to low complexity over residues 833 to 848 (AGFAGPPGADGQPGAK) and 877 to 914 (PTGVTGPKGARGAQGPPGATGFPGAAGRVGPPGANGNP). The residue at position 907 (proline 907) is a 3-hydroxyproline. 4-hydroxyproline is present on residues proline 908, proline 914, and proline 920. The segment covering 962 to 980 (DGPSGLDGPPGPQGLAGQR) has biased composition (low complexity). Residues 1069–1079 (APGPPGSPGPA) show a composition bias toward pro residues. Over residues 1115–1129 (RGDKGESGEQGERGL) the composition is skewed to basic and acidic residues. Proline 1144 is subject to 3-hydroxyproline. Composition is skewed to low complexity over residues 1148–1157 (SGDQGASGPA) and 1171–1181 (PSGKDGSNGIP). Proline 1181 carries the 4-hydroxyproline modification. A 3-hydroxyproline modification is found at proline 1186. A 4-hydroxyproline modification is found at proline 1187. Pro residues predominate over residues 1199–1216 (VGPPGSPGPPGPPGPPGP). Proline 1201 is subject to 3-hydroxyproline. Residues proline 1202 and proline 1205 each carry the 4-hydroxyproline modification. Proline 1207 is subject to 3-hydroxyproline. 4-hydroxyproline occurs at positions 1208 and 1211. Proline 1213 is modified (3-hydroxyproline). A 4-hydroxyproline modification is found at proline 1214. The nonhelical region (C-terminal) stretch occupies residues 1215–1241 (GPGIDMSAFAGLGQREKGPDPMQYMRA). The Fibrillar collagen NC1 domain maps to 1253–1487 (VEVDATLKSL…GVDIGPVCFL (235 aa)). 3 disulfide bridges follow: cysteine 1283–cysteine 1315, cysteine 1323–cysteine 1485, and cysteine 1393–cysteine 1438. Positions 1301, 1303, 1304, 1306, and 1309 each coordinate Ca(2+).

Belongs to the fibrillar collagen family. Homotrimers of alpha 1(II) chains. Post-translationally, contains mostly 4-hydroxyproline. Prolines at the third position of the tripeptide repeating unit (G-X-P) are 4-hydroxylated in some or all of the chains. In terms of processing, contains 3-hydroxyproline at a few sites. This modification occurs on the first proline residue in the sequence motif Gly-Pro-Hyp, where Hyp is 4-hydroxyproline. Lysine residues at the third position of the tripeptide repeating unit (G-X-Y) are 5-hydroxylated in some or all of the chains. Post-translationally, O-glycosylated on hydroxylated lysine residues. The O-linked glycan consists of a Glc-Gal disaccharide.

Its subcellular location is the secreted. The protein localises to the extracellular space. It localises to the extracellular matrix. Its function is as follows. Type II collagen is specific for cartilaginous tissues. It is essential for the normal embryonic development of the skeleton, for linear growth and for the ability of cartilage to resist compressive forces. The polypeptide is Collagen alpha-1(II) chain (Mus musculus (Mouse)).